Here is a 358-residue protein sequence, read N- to C-terminus: MHMPVAGPHTHTLFTVSRTMLTVVAALTPATLFGLWEFGWPAIFLFLTTVVSAWVFEVACLKIADKPIRPFATDGSAILSGWLVAMTLPPYAPWWVGVIGSFIAIVIAKHLFGGLGQNLFNPAMVARAMLVVALPVQMTTWIAPVGLLEGPSFLHGLSITFLGSQEFDAVSSASTLSHIKSQISAGATMGEILPTLADLESRLLGFVPGSLGETSTVLLALGGLLLLVTRIITPTIPLAVLGTLVTLSAICSFLAPDRFAPPILHLTSGSTMLCAFFIATDYVTSPVTTAGKWVYGIGIGTLVFVIPLRRLPRGRGLCGALDELGHAPDRNLHPAADLRTVPHRQAACAAKPAKGAQK.

Transmembrane regions (helical) follow at residues 16–36 (VSRT…FGLW), 38–58 (FGWP…VFEV), 68–90 (IRPF…TLPP), 128–148 (AMLV…VGLL), 206–226 (FVPG…GLLL), 236–256 (IPLA…FLAP), and 286–306 (PVTT…VFVI).

This sequence belongs to the NqrB/RnfD family. In terms of assembly, the complex is composed of six subunits: RnfA, RnfB, RnfC, RnfD, RnfE and RnfG. FMN serves as cofactor.

The protein resides in the cellular chromatophore membrane. In terms of biological role, part of a membrane-bound complex that couples electron transfer with translocation of ions across the membrane. Required for nitrogen fixation. Involved in electron transfer to nitrogenase. This Rhodobacter capsulatus (Rhodopseudomonas capsulata) protein is Ion-translocating oxidoreductase complex subunit D.